The following is a 629-amino-acid chain: MQKQTLSFQAEVAQLLKLVTHSLYSNPDIFLRELISNASDACDKLRFEALNDAGLYENDSELKVRVSFDKAAKTLTITDNGIGMSQQEAIEHLGTIAKSGTRDFVAKLSGDQKNDAQLIGQFGVGFYSGFIVADKITVESRRAGLPAAQGVRWVSEGTGEFDVSETLRAERGTSIILHLKDDAADYLNAWKLKGIINKYSDHISLPILMPKEEWKEGENDQPGEMAFTGEWETVNQAAALWTRPKKDITPEHYAEFYKQISYDSEAPLATTHNRVEGATEYTQLLFIPAKAPMDMYNRDKAAGVKLYVKRVFIMDDAQALLPTYLRFVKGVVDSSDLPLNVSRELLQESRAVKAIREGCTKRVLSMIEDLANNEPEKFKTFYAEFGAVLKEGLGEDFANRERLAKLLRFASSTTDTTTVSFADYKARMKDGQDAIYYITADTLAAAKSSPQLEIFRKKGIEVLLMADRVDEWALNYLNEFDGTPLQSVAKGAVDLGKLQDEDEKKAAEEAQTQFKPILDKLKEALKDKASDVRATSRLVDSPACLVVQDGDMSTQLARMLKQAGQTVPEVKPILEVNAQHPLVRKLEASSELASFDDLANILFDQALLAEGGMPTDPAAYVRRVNALLV.

The tract at residues 1–343 is a; substrate-binding; that stretch reads MQKQTLSFQA…SSDLPLNVSR (343 aa). The segment at 344–558 is b; sequence ELLQESRAVK…DGDMSTQLAR (215 aa). Positions 559–629 are c; sequence MLKQAGQTVP…YVRRVNALLV (71 aa).

It belongs to the heat shock protein 90 family. Homodimer.

The protein resides in the cytoplasm. Functionally, molecular chaperone. Has ATPase activity. This is Chaperone protein HtpG from Polaromonas naphthalenivorans (strain CJ2).